Reading from the N-terminus, the 436-residue chain is C4-dicarboxylate transport protein 2 (436 aa).

A run of 9 helical transmembrane segments spans residues 14–34 (VLVA…TAVA), 45–65 (LIKM…IAGM), 77–97 (MALL…LVVV), 142–162 (VVGA…VLFG), 198–218 (PIGA…GSLV), 223–243 (LMLC…GGIA), 290–310 (VVGL…SIYL), 331–351 (ITLL…TGSG), and 353–373 (IVLA…LALI). The disordered stretch occupies residues 414-436 (ELAGEGNASSPASDIPVGGREAV).

Belongs to the dicarboxylate/amino acid:cation symporter (DAACS) (TC 2.A.23) family.

The protein resides in the cell inner membrane. Responsible for the transport of dicarboxylates such as succinate, fumarate, and malate from the periplasm across the membrane. This chain is C4-dicarboxylate transport protein 2, found in Pseudomonas paraeruginosa (strain DSM 24068 / PA7) (Pseudomonas aeruginosa (strain PA7)).